Here is a 329-residue protein sequence, read N- to C-terminus: Phosphate acetyltransferase (329 aa).

The protein belongs to the phosphate acetyltransferase and butyryltransferase family.

The protein localises to the cytoplasm. The catalysed reaction is acetyl-CoA + phosphate = acetyl phosphate + CoA. The protein operates within metabolic intermediate biosynthesis; acetyl-CoA biosynthesis; acetyl-CoA from acetate: step 2/2. This Staphylococcus epidermidis (strain ATCC 12228 / FDA PCI 1200) protein is Phosphate acetyltransferase (pta).